The following is a 104-amino-acid chain: Large ribosomal subunit protein uL24 (104 aa).

It belongs to the universal ribosomal protein uL24 family. In terms of assembly, part of the 50S ribosomal subunit.

In terms of biological role, one of two assembly initiator proteins, it binds directly to the 5'-end of the 23S rRNA, where it nucleates assembly of the 50S subunit. Its function is as follows. One of the proteins that surrounds the polypeptide exit tunnel on the outside of the subunit. This is Large ribosomal subunit protein uL24 from Azotobacter vinelandii (strain DJ / ATCC BAA-1303).